Consider the following 242-residue polypeptide: Ribonuclease PH (242 aa).

Phosphate-binding positions include arginine 89 and 127–129 (GTR).

It belongs to the RNase PH family. As to quaternary structure, homohexameric ring arranged as a trimer of dimers.

It carries out the reaction tRNA(n+1) + phosphate = tRNA(n) + a ribonucleoside 5'-diphosphate. Functionally, phosphorolytic 3'-5' exoribonuclease that plays an important role in tRNA 3'-end maturation. Removes nucleotide residues following the 3'-CCA terminus of tRNAs; can also add nucleotides to the ends of RNA molecules by using nucleoside diphosphates as substrates, but this may not be physiologically important. Probably plays a role in initiation of 16S rRNA degradation (leading to ribosome degradation) during starvation. This is Ribonuclease PH from Neisseria gonorrhoeae (strain ATCC 700825 / FA 1090).